A 227-amino-acid polypeptide reads, in one-letter code: Cytochrome c oxidase subunit 2 (227 aa).

Residues 1 to 14 (MAYTFQLGLQDATS) are Mitochondrial intermembrane-facing. The chain crosses the membrane as a helical span at residues 15–45 (PIMEELTNFHDHTLMIVFLISSLVLYVISLM). Residues 46–59 (LTTKLTHTNTMDAQ) lie on the Mitochondrial matrix side of the membrane. The helical transmembrane segment at 60–87 (EVETIWTILPAVILILIALPSLRILYMM) threads the bilayer. The Mitochondrial intermembrane portion of the chain corresponds to 88–227 (DEINNPVLTV…HFENWSASMI (140 aa)). Positions 161, 196, 198, 200, 204, and 207 each coordinate Cu cation. Glu-198 contributes to the Mg(2+) binding site.

Belongs to the cytochrome c oxidase subunit 2 family. In terms of assembly, component of the cytochrome c oxidase (complex IV, CIV), a multisubunit enzyme composed of 14 subunits. The complex is composed of a catalytic core of 3 subunits MT-CO1, MT-CO2 and MT-CO3, encoded in the mitochondrial DNA, and 11 supernumerary subunits COX4I, COX5A, COX5B, COX6A, COX6B, COX6C, COX7A, COX7B, COX7C, COX8 and NDUFA4, which are encoded in the nuclear genome. The complex exists as a monomer or a dimer and forms supercomplexes (SCs) in the inner mitochondrial membrane with NADH-ubiquinone oxidoreductase (complex I, CI) and ubiquinol-cytochrome c oxidoreductase (cytochrome b-c1 complex, complex III, CIII), resulting in different assemblies (supercomplex SCI(1)III(2)IV(1) and megacomplex MCI(2)III(2)IV(2)). Found in a complex with TMEM177, COA6, COX18, COX20, SCO1 and SCO2. Interacts with TMEM177 in a COX20-dependent manner. Interacts with COX20. Interacts with COX16. Cu cation is required as a cofactor.

It localises to the mitochondrion inner membrane. It catalyses the reaction 4 Fe(II)-[cytochrome c] + O2 + 8 H(+)(in) = 4 Fe(III)-[cytochrome c] + 2 H2O + 4 H(+)(out). Its function is as follows. Component of the cytochrome c oxidase, the last enzyme in the mitochondrial electron transport chain which drives oxidative phosphorylation. The respiratory chain contains 3 multisubunit complexes succinate dehydrogenase (complex II, CII), ubiquinol-cytochrome c oxidoreductase (cytochrome b-c1 complex, complex III, CIII) and cytochrome c oxidase (complex IV, CIV), that cooperate to transfer electrons derived from NADH and succinate to molecular oxygen, creating an electrochemical gradient over the inner membrane that drives transmembrane transport and the ATP synthase. Cytochrome c oxidase is the component of the respiratory chain that catalyzes the reduction of oxygen to water. Electrons originating from reduced cytochrome c in the intermembrane space (IMS) are transferred via the dinuclear copper A center (CU(A)) of subunit 2 and heme A of subunit 1 to the active site in subunit 1, a binuclear center (BNC) formed by heme A3 and copper B (CU(B)). The BNC reduces molecular oxygen to 2 water molecules using 4 electrons from cytochrome c in the IMS and 4 protons from the mitochondrial matrix. The protein is Cytochrome c oxidase subunit 2 (MT-CO2) of Niviventer culturatus (Oldfield white-bellied rat).